The primary structure comprises 25 residues: M-poneritoxin-Na1b (25 aa).

It belongs to the non-disulfide-bridged peptide (NDBP) superfamily. Medium-length antimicrobial peptide (group 3) family. Ponericin-W subfamily. As to expression, expressed by the venom gland.

It localises to the secreted. Its subcellular location is the target cell membrane. In terms of biological role, membrane-perturbating peptide with multiple activities. It is insecticidal, since it induces reversible paralysis in insects (L.cuprina) after 1 hour, but fails to kill flies. It shows a relatively strong and broad-spectrum antibacterial activity against both Gram-positive and Gram-negative bacteria (MIC&lt;20 uM). It is also anthelmintic, since it potently inhibits the larval development of the major pathogenic nematode of ruminants (H.contortus, IC(50)=2.8 uM). Interestingly, only at 10 uM, it increases adult males motility of the other nematode B.malayi for 24 hours post-treatment, followed by a reduction in motility for the rest of the experiment. It shows cytotoxic activity against HEK293 cells (EC(50)=4-6 uM) and induces hemolysis in human erythrocytes (EC(50)=40-62 uM). In addition, it causes an important increase in intracellular calcium concentration on neuronal and epithelial cell lines, which supports a non-specific membrane perturbation mechanism of action. In vivo, it induces pain by intraplantar injection into mice, suggesting a defensive function against vertebrate predators. This is M-poneritoxin-Na1b from Neoponera apicalis (Ant).